Here is a 428-residue protein sequence, read N- to C-terminus: Enolase (428 aa).

Glutamine 162 is a (2R)-2-phosphoglycerate binding site. The active-site Proton donor is the glutamate 204. Residues aspartate 241, glutamate 283, and aspartate 310 each coordinate Mg(2+). Positions 335, 364, 365, and 386 each coordinate (2R)-2-phosphoglycerate. Catalysis depends on lysine 335, which acts as the Proton acceptor.

Belongs to the enolase family. Requires Mg(2+) as cofactor.

The protein resides in the cytoplasm. The protein localises to the secreted. It is found in the cell surface. It carries out the reaction (2R)-2-phosphoglycerate = phosphoenolpyruvate + H2O. It participates in carbohydrate degradation; glycolysis; pyruvate from D-glyceraldehyde 3-phosphate: step 4/5. Its function is as follows. Catalyzes the reversible conversion of 2-phosphoglycerate (2-PG) into phosphoenolpyruvate (PEP). It is essential for the degradation of carbohydrates via glycolysis. The chain is Enolase from Rhodococcus jostii (strain RHA1).